We begin with the raw amino-acid sequence, 345 residues long: Beta-2-glycoprotein 1 (345 aa).

Positions 1 to 19 are cleaved as a signal peptide; the sequence is MISPVLILFSSFLCHVAIA. 4 consecutive Sushi domains span residues 21–81, 82–139, 140–202, and 203–262; these read RTCP…KCTP, RVCP…VCAP, ITCP…ECRE, and VKCP…SCKA. 11 disulfides stabilise this stretch: cysteine 23–cysteine 66, cysteine 51–cysteine 79, cysteine 84–cysteine 124, cysteine 110–cysteine 137, cysteine 142–cysteine 188, cysteine 174–cysteine 200, cysteine 205–cysteine 248, cysteine 234–cysteine 260, cysteine 264–cysteine 315, cysteine 300–cysteine 325, and cysteine 307–cysteine 345. Residue threonine 33 is glycosylated (O-linked (GalNAc...) threonine). Threonine 149 carries O-linked (GalNAc...) threonine glycosylation. 3 N-linked (GlcNAc...) asparagine glycosylation sites follow: asparagine 162, asparagine 183, and asparagine 193. Asparagine 253 carries an N-linked (GlcNAc...) asparagine glycan. Residues 263 to 345 form a sushi-like region; sequence SCKVPVKKAT…KTDASDVKPC (83 aa).

In terms of tissue distribution, expressed by the liver and secreted in plasma.

It localises to the secreted. In terms of biological role, binds to various kinds of negatively charged substances such as heparin, phospholipids, and dextran sulfate. May prevent activation of the intrinsic blood coagulation cascade by binding to phospholipids on the surface of damaged cells. The chain is Beta-2-glycoprotein 1 (APOH) from Pan troglodytes (Chimpanzee).